A 261-amino-acid chain; its full sequence is Syntaxin-7 (261 aa).

Position 2 is an N-acetylserine (Ser-2). The Cytoplasmic segment spans residues 2–238; it reads SYTPGVGGDP…DYQRKSRKTL (237 aa). A Phosphothreonine modification is found at Thr-4. Phosphoserine is present on Ser-45. Residues 47 to 69 are a coiled coil; sequence ELRQQLQQKQQYTNQLAKETDKY. At Ser-75 the chain carries Phosphoserine. Thr-79 bears the Phosphothreonine mark. Phosphoserine is present on residues Ser-125, Ser-126, Ser-129, and Ser-205. The tract at residues 129–148 is disordered; that stretch reads SGSFPEDSSKERNLVSWESQ. A t-SNARE coiled-coil homology domain is found at 165–227; sequence LRLIHERESS…QQANQQLSRA (63 aa). A helical; Anchor for type IV membrane protein transmembrane segment spans residues 239 to 259; it reads CIIILILVIGVAIISLIIWGL. The Vesicular portion of the chain corresponds to 260–261; that stretch reads NH.

The protein belongs to the syntaxin family. As to quaternary structure, forms a SNARE complex with VTI1B, STX8 and VAMP8 which functions in the homotypic fusion of late endosomes. Component of the SNARE complex composed of STX7, STX8, VAMP7 and VTI1B that is required for heterotypic fusion of late endosomes with lysosomes. Interacts with VPS11, VPS16 and VPS18. Interacts with VPS33A. Interacts with TPC1. Highest expression is found in placenta followed by heart, skeletal muscle, kidney and brain. Low expression is found in pancreas, lung and liver.

It is found in the early endosome membrane. May be involved in protein trafficking from the plasma membrane to the early endosome (EE) as well as in homotypic fusion of endocytic organelles. Mediates the endocytic trafficking from early endosomes to late endosomes and lysosomes. The sequence is that of Syntaxin-7 (STX7) from Homo sapiens (Human).